A 407-amino-acid polypeptide reads, in one-letter code: F-box protein SKIP23 (407 aa).

The F-box domain maps to 2-50; the sequence is VDWSTLPKDLLDLISKSLESSFDLIQFRSVCSSWRSAAEPKSPLPTHHL.

As to quaternary structure, part of a SCF (ASK-cullin-F-box) protein ligase complex. Interacts with SKP1A/ASK1.

The protein localises to the nucleus. It participates in protein modification; protein ubiquitination. Its function is as follows. Component of SCF(ASK-cullin-F-box) E3 ubiquitin ligase complexes, which may mediate the ubiquitination and subsequent proteasomal degradation of target proteins. This is F-box protein SKIP23 (SKIP23) from Arabidopsis thaliana (Mouse-ear cress).